Reading from the N-terminus, the 411-residue chain is Secretion apparatus protein BsaZ (411 aa).

4 consecutive transmembrane segments (helical) span residues 28-48, 80-100, 137-157, and 175-195; these read IVALIVIATGALAAPALVDLT, IAAPFVLLCAAAGALPSLVQS, ALLYVGVFALTVRVFADLYHA, and IVLTVRLVLLFLLCALPVLIL. The tract at residues 341–411 is disordered; that stretch reads AANRGGPPPE…APARTGDQNA (71 aa). A compositionally biased stretch (low complexity) spans 370–404; that stretch reads DACADNAFPDDAPPGAAAPNAGSPDSPAPDGGAPA.

The protein belongs to the type III secretion exporter family.

The protein resides in the cell membrane. In terms of biological role, part of the bsa type III secretion system, is involved in the intracellular replication of invading bacteria inside the host cell. Probably necessary for the lysis of the vacuole membrane and escape into the host cell cytoplasm. The polypeptide is Secretion apparatus protein BsaZ (bsaZ) (Burkholderia pseudomallei (strain 1106a)).